A 240-amino-acid polypeptide reads, in one-letter code: RNA transcription, translation and transport factor protein (240 aa).

This sequence belongs to the RTRAF family. In terms of assembly, homodimer. Component of a tRNA-splicing ligase complex.

It localises to the nucleus. The protein resides in the cytoplasm. Its subcellular location is the cytosol. The protein localises to the perinuclear region. It is found in the cytoskeleton. It localises to the microtubule organizing center. The protein resides in the centrosome. Functionally, RNA-binding protein involved in modulation of mRNA transcription by Polymerase II. Component of the tRNA-splicing ligase complex. This chain is RNA transcription, translation and transport factor protein, found in Xenopus laevis (African clawed frog).